A 974-amino-acid polypeptide reads, in one-letter code: MSVSMRDLDPAFQGAGQKAGIEIWRIENFIPTPIPKSSIGKFFTGDSYIVLKTTALKTGALRHDIHYWLGKDTSQDEAGTAAVKTVELDAALGGRAVQYREVQGHETEKFLSYFKPCIIPQEGGVASGFKHVVAEEHITRLFVCRGKHVVHVKEVPFARSSLNHDDIYILDTKSKIFQFNGSNSSIQERAKALEVVQYIKDTYHDGTCEVATVEDGKLMADADSGEFWGFFGGFAPLPRKTANDEDKTYNSDITRLFCVEKGQANPVEGDTLKREMLDTNKCYILDCGIEVFVWMGRTTSLDDRKIASKAAEEMIRSSERPKSQMIRIIEGFETVPFRSKFESWTQETNTTVSEDGRGRVAALLQRQGVNVRGLMKAAPPKEEPQVFIDCTGNLQVWRVNGQAKTLLQAADHSKFYSGDCYVFQYSYPGEEKEEVLIGTWFGKQSVEEERGSAVSMASKMVESMKFVPAQARIYEGKEPIQFFVIMQSFIVFKGGISSGYKKYIAEKEVDDDTYNENGVALFRIQGSGPENMQAIQVDPVAASLNSSYYYILHNDSSVFTWAGNLSTATDQELAERQLDLIKPNQQSRAQKEGSESEQFWELLGGKAEYSSQKLTKEPERDPHLFSCTFTKEVLKVTEIYNFTQDDLMTEDIFIIDCHSEIFVWVGQEVVPKNKLLALTIGEKFIEKDSLLEKLSPEAPIYVIMEGGEPSFFTRFFTSWDSSKSAMHGNSFQRKLKIVKNGGTPVADKPKRRTPASYGGRASVPDKSQQRSRSMSFSPDRVRVRGRSPAFNALAATFESQNARNLSTPPPVVRKLYPRSVTPDSSKFAPAPKSSAIASRSALFEKIPPQEPSIPKPVKASPKTPESPAPESNSKEQEEKKENDKEEGSMSSRIESLTIQEDAKEGVEDEEDLPAHPYDRLKTTSTDPVSDIDVTRREAYLSSEEFKEKFGMTKEAFYKLPKWKQNKFKMAVQLF.

6 Gelsolin-like repeats span residues 29 to 79 (FIPT…DEAG), 150 to 190 (VHVK…QERA), 262 to 305 (GQAN…DDRK), 394 to 451 (LQVW…EERG), 532 to 572 (MQAI…TDQE), and 634 to 675 (LKVT…KNKL). A disordered region spans residues 738–783 (VKNGGTPVADKPKRRTPASYGGRASVPDKSQQRSRSMSFSPDRVRV). 2 positions are modified to phosphoserine: Ser777 and Ser787. 2 disordered regions span residues 801-833 (NARN…APKS) and 845-930 (KIPP…PVSD). The segment covering 824–833 (SSKFAPAPKS) has biased composition (low complexity). Basic and acidic residues predominate over residues 872 to 887 (NSKEQEEKKENDKEEG). Positions 888 to 898 (SMSSRIESLTI) are enriched in polar residues. At Ser890 the chain carries Phosphoserine. An HP domain is found at 909–974 (EEDLPAHPYD…NKFKMAVQLF (66 aa)). Positions 912–921 (LPAHPYDRLK) are enriched in basic and acidic residues.

The protein belongs to the villin/gelsolin family. As to expression, preferentially expressed in vegetative tissues. Detected in the whole seedling, hypocotyl, cotyledon, primary root, roots hair cells and trichomes. Expressed in flowers but not in the silique.

The protein resides in the cytoplasm. It is found in the cytoskeleton. In terms of biological role, binds actin and actin filament bundles in a Ca(2+)-insensitive manner, but caps the barbed end of actin filaments and is able to sever them in a calcium-dependent manner. Involved in root hair growth through regulating actin organization in a Ca(2+)-dependent manner. The chain is Villin-4 from Arabidopsis thaliana (Mouse-ear cress).